Here is a 154-residue protein sequence, read N- to C-terminus: Deoxyuridine 5'-triphosphate nucleotidohydrolase (154 aa).

Substrate is bound by residues 64–66 (RSG), N77, 81–83 (TVD), and K91.

Belongs to the dUTPase family. Homotrimer. Requires Mg(2+) as cofactor.

It carries out the reaction dUTP + H2O = dUMP + diphosphate + H(+). The protein operates within pyrimidine metabolism; dUMP biosynthesis; dUMP from dCTP (dUTP route): step 2/2. Functionally, this enzyme is involved in nucleotide metabolism: it produces dUMP, the immediate precursor of thymidine nucleotides and it decreases the intracellular concentration of dUTP so that uracil cannot be incorporated into DNA. The sequence is that of Deoxyuridine 5'-triphosphate nucleotidohydrolase from Mycobacterium leprae (strain Br4923).